We begin with the raw amino-acid sequence, 51 residues long: Putative ribosomal protein eL39-like 5 (51 aa).

Belongs to the eukaryotic ribosomal protein eL39 family.

The chain is Putative ribosomal protein eL39-like 5 (RPL39P5) from Homo sapiens (Human).